A 428-amino-acid polypeptide reads, in one-letter code: 3-phosphoshikimate 1-carboxyvinyltransferase (428 aa).

3-phosphoshikimate contacts are provided by K22, S23, and R27. Residue K22 participates in phosphoenolpyruvate binding. Residues G96 and R124 each coordinate phosphoenolpyruvate. Residues S171, S172, Q173, S198, D311, and K338 each contribute to the 3-phosphoshikimate site. Q173 serves as a coordination point for phosphoenolpyruvate. D311 acts as the Proton acceptor in catalysis. Residues R342 and R383 each coordinate phosphoenolpyruvate.

This sequence belongs to the EPSP synthase family. In terms of assembly, monomer.

Its subcellular location is the cytoplasm. The enzyme catalyses 3-phosphoshikimate + phosphoenolpyruvate = 5-O-(1-carboxyvinyl)-3-phosphoshikimate + phosphate. It functions in the pathway metabolic intermediate biosynthesis; chorismate biosynthesis. Catalyzes the transfer of the enolpyruvyl moiety of phosphoenolpyruvate (PEP) to the 5-hydroxyl of shikimate-3-phosphate (S3P) to produce enolpyruvyl shikimate-3-phosphate and inorganic phosphate. The polypeptide is 3-phosphoshikimate 1-carboxyvinyltransferase (Methanopyrus kandleri (strain AV19 / DSM 6324 / JCM 9639 / NBRC 100938)).